Reading from the N-terminus, the 569-residue chain is Amyloid-beta A4 precursor protein-binding family A member 3 (569 aa).

The residue at position 1 (methionine 1) is an N-acetylmethionine. 2 disordered regions span residues 1 to 53 (MEFL…MELD) and 124 to 168 (AQSV…SSPE). Residues 19 to 32 (EEPKGPEVPSEDHP) are compositionally biased toward basic and acidic residues. Positions 132 to 141 (AQAAPRLLQP) are enriched in low complexity. A phosphoserine mark is found at serine 166 and serine 367. The region spanning 212 to 376 (DGVLFGAKYL…SASASHPHNG (165 aa)) is the PID domain. 2 PDZ domains span residues 389-475 (EVCI…IIHC) and 480-554 (TAVI…TMPA).

As to quaternary structure, binds to the cytoplasmic domain of amyloid protein (APP). Interacts with HIF1AN (via N-terminus). Interacts with NECAB3; seems to mediate the interaction between NECAB3 and HIF1AN. Ubiquitous.

The protein resides in the cytoplasm. The protein localises to the perinuclear region. Its function is as follows. May modulate processing of the amyloid-beta precursor protein (APP) and hence formation of APP-beta. May enhance the activity of HIF1A in macrophages by inhibiting the activity of HIF1AN. This is Amyloid-beta A4 precursor protein-binding family A member 3 (Apba3) from Rattus norvegicus (Rat).